A 374-amino-acid chain; its full sequence is N-acetyldiaminopimelate deacetylase (374 aa).

Aspartate 69 is a catalytic residue. The active-site Proton acceptor is glutamate 128.

The protein belongs to the peptidase M20A family. N-acetyldiaminopimelate deacetylase subfamily.

It carries out the reaction N-acetyl-(2S,6S)-2,6-diaminopimelate + H2O = (2S,6S)-2,6-diaminopimelate + acetate. The protein operates within amino-acid biosynthesis; L-lysine biosynthesis via DAP pathway; LL-2,6-diaminopimelate from (S)-tetrahydrodipicolinate (acetylase route): step 3/3. Its function is as follows. Catalyzes the conversion of N-acetyl-diaminopimelate to diaminopimelate and acetate. The polypeptide is N-acetyldiaminopimelate deacetylase (ykuR) (Bacillus subtilis (strain 168)).